Reading from the N-terminus, the 205-residue chain is Holliday junction branch migration complex subunit RuvA (205 aa).

The tract at residues 1 to 67 (MITSIFGKVT…QIIEEAFAFN (67 aa)) is domain I. Residues 68–146 (TLEEKEWFCR…NNKNIKGVQV (79 aa)) are domain II. Residues 147-150 (ADGY) form a flexible linker region. The domain III stretch occupies residues 150-205 (YDELFETLKSLGYKQQEIQDALKMIEVKPDFDISQLVAEVIKLMSFKNNEITNKTA).

This sequence belongs to the RuvA family. As to quaternary structure, homotetramer. Forms an RuvA(8)-RuvB(12)-Holliday junction (HJ) complex. HJ DNA is sandwiched between 2 RuvA tetramers; dsDNA enters through RuvA and exits via RuvB. An RuvB hexamer assembles on each DNA strand where it exits the tetramer. Each RuvB hexamer is contacted by two RuvA subunits (via domain III) on 2 adjacent RuvB subunits; this complex drives branch migration. In the full resolvosome a probable DNA-RuvA(4)-RuvB(12)-RuvC(2) complex forms which resolves the HJ.

The protein localises to the cytoplasm. The RuvA-RuvB-RuvC complex processes Holliday junction (HJ) DNA during genetic recombination and DNA repair, while the RuvA-RuvB complex plays an important role in the rescue of blocked DNA replication forks via replication fork reversal (RFR). RuvA specifically binds to HJ cruciform DNA, conferring on it an open structure. The RuvB hexamer acts as an ATP-dependent pump, pulling dsDNA into and through the RuvAB complex. HJ branch migration allows RuvC to scan DNA until it finds its consensus sequence, where it cleaves and resolves the cruciform DNA. This chain is Holliday junction branch migration complex subunit RuvA, found in Mycoplasma genitalium (strain ATCC 33530 / DSM 19775 / NCTC 10195 / G37) (Mycoplasmoides genitalium).